The following is a 325-amino-acid chain: Iodotyrosine dehalogenase 1 homolog (325 aa).

Residues Val-42–Leu-62 traverse the membrane as a helical segment. The Cytoplasmic portion of the chain corresponds to Leu-63–Tyr-325. Residues Arg-135–Arg-139, Ser-163–Val-164, Val-273–Ser-275, and Arg-315 each bind FMN.

Belongs to the nitroreductase family. It depends on FMN as a cofactor. In terms of tissue distribution, expressed in body-wall, anal depressor and vulval muscles.

It is found in the membrane. Its function is as follows. May contribute to coordination of muscle contraction as regulatory subunit of the nonessential sup-9 potassium channel complex. May act downstream of sup-10. The chain is Iodotyrosine dehalogenase 1 homolog from Caenorhabditis elegans.